A 799-amino-acid chain; its full sequence is Leucine--tRNA ligase (799 aa).

Positions 39-50 match the 'HIGH' region motif; sequence PYPSGAGLHMGH. The short motif at 575–579 is the 'KMSKS' region element; that stretch reads KMSKS. Residue Lys-578 coordinates ATP.

Belongs to the class-I aminoacyl-tRNA synthetase family.

The protein localises to the cytoplasm. It carries out the reaction tRNA(Leu) + L-leucine + ATP = L-leucyl-tRNA(Leu) + AMP + diphosphate. The sequence is that of Leucine--tRNA ligase from Malacoplasma penetrans (strain HF-2) (Mycoplasma penetrans).